Consider the following 338-residue polypeptide: Eukaryotic translation initiation factor 3 subunit H (338 aa).

One can recognise an MPN domain in the interval 22–154; the sequence is VQCDGLAVMK…LKAYRLTPQA (133 aa).

This sequence belongs to the eIF-3 subunit H family. In terms of assembly, component of the eukaryotic translation initiation factor 3 (eIF-3) complex. The eIF-3 complex interacts with pix. Interacts with mxt.

The protein resides in the cytoplasm. Its function is as follows. Component of the eukaryotic translation initiation factor 3 (eIF-3) complex, which is involved in protein synthesis of a specialized repertoire of mRNAs and, together with other initiation factors, stimulates binding of mRNA and methionyl-tRNAi to the 40S ribosome. The eIF-3 complex specifically targets and initiates translation of a subset of mRNAs involved in cell proliferation. The protein is Eukaryotic translation initiation factor 3 subunit H of Drosophila yakuba (Fruit fly).